The following is a 266-amino-acid chain: MDQGLSLNTLPLKELRNLIRNNQFTGSTTGCAAGYLQANLVILPAEWATDFLLFCQKNPVACPLIDVTQPGEKYLQSIGRDIDLSTDVPEYHVFYDGEFETAVSDLSTLWREDLVTFVLGCSFSFEEALIQSGLSIRNIDEGKNVSMYDTSIPCQSSGKFSGNYVVSMRPFTSIDAIRAIQITTRFPKAHGAPVHFGDPSLIGINDISTPNYGDAVEIKPNEVPVFWGCGVTPQNVIRQSRPPFCITHAPGKMLITDRLSSEFAVL.

It belongs to the D-glutamate cyclase family.

This chain is Putative hydro-lyase VF_1377, found in Aliivibrio fischeri (strain ATCC 700601 / ES114) (Vibrio fischeri).